Consider the following 433-residue polypeptide: Protoheme IX farnesyltransferase 2 (433 aa).

Residues 1–164 (MQRFTGLVTA…LTKPRLMWLL (164 aa)) form a unknown region. Helical transmembrane passes span 4–24 (FTGL…LGVA), 35–55 (AVAH…AAAL), 67–87 (WGVT…MAVL), 95–115 (LHLF…TWHL), 160–180 (LMWL…VTGA), 184–204 (GVTI…AGTF), 236–256 (AFGV…VNPL), 257–277 (AAAL…VVLK), 282–304 (WNTV…AVAG), 308–330 (LPAL…NLAI), 357–377 (ILYW…VAGF), 378–398 (GPVY…TVVV), and 413–433 (HASN…TMVI). Residues 165–430 (CLLALSGMAL…ALLVAILVET (266 aa)) are protoheme IX prenyltransferase.

This sequence in the C-terminal section; belongs to the UbiA prenyltransferase family. Protoheme IX farnesyltransferase subfamily.

It is found in the cell membrane. It carries out the reaction heme b + (2E,6E)-farnesyl diphosphate + H2O = Fe(II)-heme o + diphosphate. The protein operates within porphyrin-containing compound metabolism; heme O biosynthesis; heme O from protoheme: step 1/1. Functionally, converts heme B (protoheme IX) to heme O by substitution of the vinyl group on carbon 2 of heme B porphyrin ring with a hydroxyethyl farnesyl side group. The protein is Protoheme IX farnesyltransferase 2 (ctaB2) of Natronomonas pharaonis (strain ATCC 35678 / DSM 2160 / CIP 103997 / JCM 8858 / NBRC 14720 / NCIMB 2260 / Gabara) (Halobacterium pharaonis).